Here is an 895-residue protein sequence, read N- to C-terminus: Ral guanine nucleotide dissociation stimulator (895 aa).

Positions 112–237 constitute an N-terminal Ras-GEF domain; the sequence is KVRTVKAGTL…RAHLLLAQLE (126 aa). The interval 301-324 is disordered; that stretch reads SELEPALEPPLDPEPTLAPAPELD. Residues 307-318 are compositionally biased toward pro residues; that stretch reads LEPPLDPEPTLA. In terms of domain architecture, Ras-GEF spans 367 to 629; it reads PPDLVAEQFT…YNLSCELEPP (263 aa). Disordered regions lie at residues 650–669 and 708–754; these read ERRQ…HSKS and VPES…STTR. Composition is skewed to low complexity over residues 656-667 and 726-753; these read STELSTSSSAHS and SSPE…VSTT. Positions 779–866 constitute a Ras-associating domain; the sequence is DCCIIRVSLD…YDFILKKRAF (88 aa). Position 795 is a phosphotyrosine (Tyr795).

Interacts with RIT1 and RIT2. Interacts with TRAF3. Interacts with HRAS. Post-translationally, phosphorylation of Tyr-795 by MET blocks HRAS binding. Expressed in all tissues examined.

The protein localises to the cytoplasm. Its subcellular location is the nucleus. Functionally, functions as a guanine nucleotide exchange factor (GEF) activating either RalA or RalB GTPases and plays an important role in intracellular transport. Interacts and acts as an effector molecule for R-Ras, H-Ras, K-Ras, and Rap. During bacterial clearance, recognizes 'Lys-33'-linked polyubiquitinated TRAF3 and subsequently mediates assembly of the exocyst complex. This is Ral guanine nucleotide dissociation stimulator (Ralgds) from Rattus norvegicus (Rat).